Here is a 263-residue protein sequence, read N- to C-terminus: PDZ domain-containing protein 9 (263 aa).

Residues 30 to 109 (QTKLTVGSMG…GTILQIKVYR (80 aa)) form the PDZ domain.

This is PDZ domain-containing protein 9 (PDZD9) from Bos taurus (Bovine).